The chain runs to 114 residues: Large ribosomal subunit protein P1 (114 aa).

The tract at residues 55–114 (EEAAAAPAAAPAASGSDDEAAADDGDDDEEADADEAAEAEDAGDDDDEEPSGEGLGDLFG) is disordered. The span at 56–69 (EAAAAPAAAPAASG) shows a compositional bias: low complexity. Residues 70 to 105 (SDDEAAADDGDDDEEADADEAAEAEDAGDDDDEEPS) show a composition bias toward acidic residues.

The protein belongs to the eukaryotic ribosomal protein P1/P2 family. Part of the 50S ribosomal subunit. Homodimer, it forms part of the ribosomal stalk which helps the ribosome interact with GTP-bound translation factors. Forms a heptameric uL10/P0(P1)2(P1)2(P1)2 complex, where uL10/P0 forms an elongated spine to which the P1 dimers bind in a sequential fashion.

Forms part of the ribosomal stalk, playing a central role in the interaction of the ribosome with GTP-bound translation factors. The chain is Large ribosomal subunit protein P1 from Halobacterium salinarum (strain ATCC 700922 / JCM 11081 / NRC-1) (Halobacterium halobium).